We begin with the raw amino-acid sequence, 574 residues long: ATP-dependent RNA helicase RhlB (574 aa).

Positions 9–37 (VTFSSFDLHPALVAGLESAGFTRCTPIQA) match the Q motif motif. The 181-residue stretch at 40–220 (LPVALPGGDV…YEHMNEPEKL (181 aa)) folds into the Helicase ATP-binding domain. Position 53–60 (53–60 (AQTGTGKT)) interacts with ATP. Positions 166-169 (DEAD) match the DEAD box motif. In terms of domain architecture, Helicase C-terminal spans 231–393 (RVRQRIYFPS…PVTSELLTPL (163 aa)). Residues 423-432 (EQRAAEEQRR) show a composition bias toward basic and acidic residues. The tract at residues 423-574 (EQRAAEEQRR…RRLRSLVSGN (152 aa)) is disordered. Positions 435–449 (GRSGPGGGSRSGSGG) are enriched in gly residues. Residues 477-495 (AAAAQTEKPVVAAAAAQAP) show a composition bias toward low complexity. The span at 506-515 (PRKRRRRRNG) shows a compositional bias: basic residues. 2 stretches are compositionally biased toward low complexity: residues 523-535 (PAVA…APAA) and 553-562 (SSGSPSLLGR).

This sequence belongs to the DEAD box helicase family. RhlB subfamily. Component of the RNA degradosome, which is a multiprotein complex involved in RNA processing and mRNA degradation.

It localises to the cytoplasm. The enzyme catalyses ATP + H2O = ADP + phosphate + H(+). In terms of biological role, DEAD-box RNA helicase involved in RNA degradation. Has RNA-dependent ATPase activity and unwinds double-stranded RNA. In Xanthomonas oryzae pv. oryzae (strain KACC10331 / KXO85), this protein is ATP-dependent RNA helicase RhlB.